The chain runs to 249 residues: Small ribosomal subunit protein uS3 (249 aa).

Positions 39-109 (IRTYVLARLK…EVKIDVVEVV (71 aa)) constitute a KH type-2 domain. Residues 226 to 239 (KERRNDAGARNRDS) are compositionally biased toward basic and acidic residues. The tract at residues 226–249 (KERRNDAGARNRDSRTKRRHRTKR) is disordered. Residues 240-249 (RTKRRHRTKR) show a composition bias toward basic residues.

Belongs to the universal ribosomal protein uS3 family. In terms of assembly, part of the 30S ribosomal subunit. Forms a tight complex with proteins S10 and S14.

Binds the lower part of the 30S subunit head. Binds mRNA in the 70S ribosome, positioning it for translation. This is Small ribosomal subunit protein uS3 from Pelodictyon phaeoclathratiforme (strain DSM 5477 / BU-1).